The primary structure comprises 89 residues: N.vectensis toxin 7 (89 aa).

The signal sequence occupies residues 1-21; sequence MASFFKIAVICLVMLVVCSNA. Disulfide bonds link C44–C77, C46–C69, and C62–C78.

In terms of tissue distribution, expressed in ectodermal gland cells.

Functionally, probable toxin. The polypeptide is N.vectensis toxin 7 (Nematostella vectensis (Starlet sea anemone)).